Reading from the N-terminus, the 84-residue chain is Alpha-mammal toxin Ts2 (84 aa).

Residues 1–20 form the signal peptide; sequence MKGFLLFISILMMIGTIVVG. Positions 21–83 constitute an LCN-type CS-alpha/beta domain; that stretch reads KEGYAMDHEG…VWDYATNKCG (63 aa). Intrachain disulfides connect cysteine 31–cysteine 82, cysteine 35–cysteine 58, cysteine 43–cysteine 63, and cysteine 47–cysteine 65. Cysteine amide is present on cysteine 82.

The protein belongs to the long (4 C-C) scorpion toxin superfamily. Sodium channel inhibitor family. Beta subfamily. As to expression, expressed by the venom gland.

It localises to the secreted. Alpha toxins bind voltage-independently at site-3 of sodium channels (Nav) and inhibit the inactivation of the activated channels, thereby blocking neuronal transmission. This toxin acts on Nav1.2/SCN2A, Nav1.3/SCN3A, Nav1.5/SCN5A, Nav1.6/SCN8A and Nav1.7/SCN9A voltage-gated sodium channels, with the highest affinity for Nav1.3/SCN3A, followed by Nav1.6/SCN8A and Nav1.7/SCN9A which are affected almost equally. Interestingly, shows a significant shift of the voltage dependence of activation for Nav1.3/SCN3A that is characteristic of beta-toxins. In addition, in presence of LPS, this toxin inhibits the release of NO, IL-6 and TNF-alpha in J774.1 cells. Further, in the absence of LPS, it stimulates the production of the anti-inflammatory cytokine IL-10. This toxin is active on mammals. The chain is Alpha-mammal toxin Ts2 from Tityus serrulatus (Brazilian scorpion).